Consider the following 350-residue polypeptide: MASRAPLELLPLNRSQLSPPNATTCDDAPEAWDLLHRVLPSVIIIICVCGLLGNLLVLAVLLRPRRRLNVAEMYLANLAASDLVFVLGLPFWAANISNQFRWPFGGLLCRLVNGVIKANLFISIFLVVAISRDRYRALVHPMATRRRRQARATCVLIWVAGSLLSVPTFLFRSIEAVPELNNDSACVLLHPPGAWHVARMVELNVLGFLLPLAAIVFFNCHILASLRGRPEVRGARCGGPPDGRTTALILTFVAAFLVCWTPYHFFAFLEFLTQVQVVRGCFWENFKDLGLQYASFFAFINSCLNPVIYVFVGRLFRTRVWDLFKQCAPRRPPAVSWSHRKRVLQLFWQN.

At 1-41 the chain is on the extracellular side; that stretch reads MASRAPLELLPLNRSQLSPPNATTCDDAPEAWDLLHRVLPS. N-linked (GlcNAc...) asparagine glycans are attached at residues N13 and N21. A helical transmembrane segment spans residues 42–62; that stretch reads VIIIICVCGLLGNLLVLAVLL. The Cytoplasmic segment spans residues 63–72; it reads RPRRRLNVAE. The chain crosses the membrane as a helical span at residues 73–93; that stretch reads MYLANLAASDLVFVLGLPFWA. Topologically, residues 94-110 are extracellular; that stretch reads ANISNQFRWPFGGLLCR. An N-linked (GlcNAc...) asparagine glycan is attached at N95. C109 and C186 are oxidised to a cystine. The chain crosses the membrane as a helical span at residues 111 to 131; sequence LVNGVIKANLFISIFLVVAIS. Over 132–150 the chain is Cytoplasmic; that stretch reads RDRYRALVHPMATRRRRQA. Residues 151–171 form a helical membrane-spanning segment; the sequence is RATCVLIWVAGSLLSVPTFLF. The Extracellular portion of the chain corresponds to 172 to 204; the sequence is RSIEAVPELNNDSACVLLHPPGAWHVARMVELN. N182 is a glycosylation site (N-linked (GlcNAc...) asparagine). Residues 205 to 225 traverse the membrane as a helical segment; that stretch reads VLGFLLPLAAIVFFNCHILAS. The Cytoplasmic portion of the chain corresponds to 226-248; that stretch reads LRGRPEVRGARCGGPPDGRTTAL. The helical transmembrane segment at 249–269 threads the bilayer; it reads ILTFVAAFLVCWTPYHFFAFL. Residues 270–292 lie on the Extracellular side of the membrane; sequence EFLTQVQVVRGCFWENFKDLGLQ. A helical transmembrane segment spans residues 293 to 313; sequence YASFFAFINSCLNPVIYVFVG. Residues 314-350 are Cytoplasmic-facing; that stretch reads RLFRTRVWDLFKQCAPRRPPAVSWSHRKRVLQLFWQN. C327 carries S-palmitoyl cysteine lipidation.

It belongs to the G-protein coupled receptor 1 family. Bradykinin receptor subfamily. BDKRB1 sub-subfamily.

It localises to the cell membrane. This is a receptor for bradykinin. Could be a factor in chronic pain and inflammation. The chain is B1 bradykinin receptor (BDKRB1) from Canis lupus familiaris (Dog).